The primary structure comprises 401 residues: Homeobox protein engrailed-1 (401 aa).

Disordered regions lie at residues 1-102 (MEEQ…PAAQ), 138-167 (GGGA…HSLG), 229-253 (SKPS…AKFP), and 293-315 (RPSS…DKRP). Residues 13-48 (DSGLGAVAAAAPSGLSLSLSPGASGSSGSDGDSVPV) show a composition bias toward low complexity. Pro residues-rich tracts occupy residues 49–64 (SPQP…PCLP) and 73–88 (PPHP…PPPQ). The segment covering 89–102 (HLAAPAHQPQPAAQ) has biased composition (low complexity). Composition is skewed to gly residues over residues 138–147 (GGGAAAGGGS) and 234–243 (SGGGSGGNAG). The segment at residues 312–371 (DKRPRTAFTAEQLQRLKAEFQANRYITEQRRQTLAQELSLNESQIKIWFQNKRAKIKKAT) is a DNA-binding region (homeobox).

This sequence belongs to the engrailed homeobox family.

The protein resides in the nucleus. Required for proper formation of the apical ectodermal ridge and correct dorsal-ventral patterning in the limb. In Mus musculus (Mouse), this protein is Homeobox protein engrailed-1 (En1).